The primary structure comprises 622 residues: Low affinity potassium transport system protein Kup (622 aa).

The next 12 membrane-spanning stretches (helical) occupy residues 9-29, 46-66, 101-121, 137-157, 165-185, 213-233, 247-267, 276-296, 337-357, 363-383, 395-415, and 416-436; these read LSAV…TSPL, PDVV…VVSV, ILVV…VITP, PALD…LFVI, VGKL…LLGL, VSFF…ALYA, WFTV…ALLL, PFFL…ATLA, IYIP…IIGF, LAAA…ILFC, FLVV…FSAN, and VLKL…MFII.

This sequence belongs to the HAK/KUP transporter (TC 2.A.72) family.

The protein localises to the cell inner membrane. The catalysed reaction is K(+)(in) + H(+)(in) = K(+)(out) + H(+)(out). Functionally, responsible for the low-affinity transport of potassium into the cell. Likely operates as a K(+):H(+) symporter. The protein is Low affinity potassium transport system protein Kup of Yersinia pestis bv. Antiqua (strain Antiqua).